Consider the following 87-residue polypeptide: Small ribosomal subunit protein bS18 (87 aa).

It belongs to the bacterial ribosomal protein bS18 family. Part of the 30S ribosomal subunit. Forms a tight heterodimer with protein bS6.

Binds as a heterodimer with protein bS6 to the central domain of the 16S rRNA, where it helps stabilize the platform of the 30S subunit. The chain is Small ribosomal subunit protein bS18 from Nitratidesulfovibrio vulgaris (strain ATCC 29579 / DSM 644 / CCUG 34227 / NCIMB 8303 / VKM B-1760 / Hildenborough) (Desulfovibrio vulgaris).